Consider the following 153-residue polypeptide: Calmodulin-like protein 4 (153 aa).

EF-hand domains are found at residues 8-43, 44-79, 81-116, and 117-152; these read DQIN…LGAS, PTPG…QIKQ, DPKK…LGEK, and LTHK…PVRD.

It belongs to the calmodulin family. In terms of assembly, interacts with MYO7B; the interaction mediates the association of CALML4 with the IMAC/intermicrovillar adhesion complex. Interacts with MYO7A. As to expression, expressed in the small intestine, in both mature enterocytes on the villus surface and immature cells that reside in the crypt stem-cell niche.

Its subcellular location is the cell projection. It localises to the microvillus. In terms of biological role, as part of the intermicrovillar adhesion complex/IMAC plays a role in epithelial brush border differentiation, controlling microvilli organization and length. Acts as a light chain for MYO7B and is required for efficient targeting of the IMAC to the tips of border brush microvilli. This is Calmodulin-like protein 4 (Calml4) from Mus musculus (Mouse).